Consider the following 591-residue polypeptide: UvrABC system protein C (591 aa).

Positions 14-91 (DSPGCYLHKD…IQKNMPKYNI (78 aa)) constitute a GIY-YIG domain. Positions 196-231 (DKIVTGLKEKMLAASQAMEFERAAEYRDLISGIATL) constitute a UVR domain.

The protein belongs to the UvrC family. Interacts with UvrB in an incision complex.

Its subcellular location is the cytoplasm. Functionally, the UvrABC repair system catalyzes the recognition and processing of DNA lesions. UvrC both incises the 5' and 3' sides of the lesion. The N-terminal half is responsible for the 3' incision and the C-terminal half is responsible for the 5' incision. The sequence is that of UvrABC system protein C from Streptococcus uberis (strain ATCC BAA-854 / 0140J).